A 310-amino-acid polypeptide reads, in one-letter code: Inner membrane protein YfdC (310 aa).

Over residues 1–12 the composition is skewed to basic and acidic residues; that stretch reads MDNDKIDQHSDE. Positions 1-27 are disordered; the sequence is MDNDKIDQHSDEIEVESEEKERGKKIE. At 1-58 the chain is on the cytoplasmic side; it reads MDNDKIDQHSDEIEVESEEKERGKKIEIDEDRLPSRAMAIHEHIRQDGEKELERDAMA. Residues 59-81 form a helical membrane-spanning segment; it reads LLWSAIAAGLSMGASLLAKGIFQ. At 82-90 the chain is on the periplasmic side; sequence VELEGVPGS. Residues 91–113 form a helical membrane-spanning segment; the sequence is FLLENLGYTFGFIIVIMARQQLF. Residues 114–133 lie on the Cytoplasmic side of the membrane; that stretch reads TENTVTAVLPVMQKPTMSNV. A helical membrane pass occupies residues 134–156; it reads GLLIRLWGVVLLGNILGTGIAAW. Residues 157–186 are Periplasmic-facing; sequence AFEYMPIFNEETRDAFVKIGMDVMKNTPSE. A helical transmembrane segment spans residues 187–206; it reads MFANAIISGWLIATMVWMFP. The Cytoplasmic portion of the chain corresponds to 207–212; the sequence is AAGAAK. A helical transmembrane segment spans residues 213-232; sequence IVVIILMTWLIALGDTTHIV. Over 233–251 the chain is Periplasmic; the sequence is VGSVEILYLVFNGTLHWSD. A helical transmembrane segment spans residues 252 to 274; that stretch reads FIWPFALPTLAGNICGGTFIFAL. At 275–310 the chain is on the cytoplasmic side; sequence MSHAQIRNDMSNKRKAEARQKAERAENIKKNYKNPA. Over residues 291 to 303 the composition is skewed to basic and acidic residues; that stretch reads EARQKAERAENIK. The segment at 291-310 is disordered; it reads EARQKAERAENIKKNYKNPA.

Its subcellular location is the cell inner membrane. The sequence is that of Inner membrane protein YfdC (yfdC) from Escherichia coli (strain K12).